A 475-amino-acid chain; its full sequence is Tryptophan--tRNA ligase, cytoplasmic (475 aa).

The WHEP-TRS domain occupies Ser12–Pro68. The disordered stretch occupies residues Asp61–Asp87. Lys158 carries the post-translational modification N6-succinyllysine. The 'HIGH' region motif lies at Pro168–His177. Positions Lys353 to Ser357 match the 'KMSKS' region motif. Ser355 bears the Phosphoserine mark.

It belongs to the class-I aminoacyl-tRNA synthetase family. As to quaternary structure, homodimer. Interacts with oxidized form of GAPDH. In terms of processing, proteolytic cleavage generates 2 forms; T1-TrpRS and T2-TrpRS.

The protein resides in the cytoplasm. It catalyses the reaction tRNA(Trp) + L-tryptophan + ATP = L-tryptophyl-tRNA(Trp) + AMP + diphosphate + H(+). Functionally, catalyzes the attachment of tryptophan to tRNA(Trp) in a two-step reaction: tryptophan is first activated by ATP to form Trp-AMP and then transferred to the acceptor end of the tRNA(Trp). Could also possess an angiostatic activity. The sequence is that of Tryptophan--tRNA ligase, cytoplasmic (WARS1) from Oryctolagus cuniculus (Rabbit).